We begin with the raw amino-acid sequence, 278 residues long: Probable endonuclease 4 (278 aa).

Positions 69, 109, 145, 179, 182, 214, 227, 229, and 259 each coordinate Zn(2+).

The protein belongs to the AP endonuclease 2 family. Zn(2+) serves as cofactor.

The enzyme catalyses Endonucleolytic cleavage to 5'-phosphooligonucleotide end-products.. Endonuclease IV plays a role in DNA repair. It cleaves phosphodiester bonds at apurinic or apyrimidinic (AP) sites, generating a 3'-hydroxyl group and a 5'-terminal sugar phosphate. The chain is Probable endonuclease 4 from Bacteroides fragilis (strain ATCC 25285 / DSM 2151 / CCUG 4856 / JCM 11019 / LMG 10263 / NCTC 9343 / Onslow / VPI 2553 / EN-2).